The chain runs to 200 residues: Bombinin-like peptides 3 (200 aa).

The segment at residues 1–16 (MNFKYIVAVSILIASA) is a signal peptide (or 18). A phenylalanine amide mark is found at phenylalanine 68 and phenylalanine 129.

The protein belongs to the bombinin family. As to expression, expressed by the skin glands.

Its subcellular location is the secreted. In terms of biological role, has antimicrobial activity, but no hemolytic activity. Preference on killing Gram-negative non-enteric bacteria. This is Bombinin-like peptides 3 from Bombina orientalis (Oriental fire-bellied toad).